A 616-amino-acid chain; its full sequence is Dihydroxy-acid dehydratase 1 (616 aa).

Asp-81 provides a ligand contact to Mg(2+). [2Fe-2S] cluster is bound at residue Cys-122. Residues Asp-123 and Lys-124 each contribute to the Mg(2+) site. Lys-124 is modified (N6-carboxylysine). Cys-195 serves as a coordination point for [2Fe-2S] cluster. Glu-491 lines the Mg(2+) pocket. Ser-517 (proton acceptor) is an active-site residue.

Belongs to the IlvD/Edd family. As to quaternary structure, homodimer. The cofactor is [2Fe-2S] cluster. Requires Mg(2+) as cofactor.

It catalyses the reaction (2R)-2,3-dihydroxy-3-methylbutanoate = 3-methyl-2-oxobutanoate + H2O. The enzyme catalyses (2R,3R)-2,3-dihydroxy-3-methylpentanoate = (S)-3-methyl-2-oxopentanoate + H2O. Its pathway is amino-acid biosynthesis; L-isoleucine biosynthesis; L-isoleucine from 2-oxobutanoate: step 3/4. It participates in amino-acid biosynthesis; L-valine biosynthesis; L-valine from pyruvate: step 3/4. In terms of biological role, functions in the biosynthesis of branched-chain amino acids. Catalyzes the dehydration of (2R,3R)-2,3-dihydroxy-3-methylpentanoate (2,3-dihydroxy-3-methylvalerate) into 2-oxo-3-methylpentanoate (2-oxo-3-methylvalerate) and of (2R)-2,3-dihydroxy-3-methylbutanoate (2,3-dihydroxyisovalerate) into 2-oxo-3-methylbutanoate (2-oxoisovalerate), the penultimate precursor to L-isoleucine and L-valine, respectively. This Bradyrhizobium diazoefficiens (strain JCM 10833 / BCRC 13528 / IAM 13628 / NBRC 14792 / USDA 110) protein is Dihydroxy-acid dehydratase 1.